The primary structure comprises 612 residues: DNA mismatch repair protein MutL (612 aa).

The protein belongs to the DNA mismatch repair MutL/HexB family.

In terms of biological role, this protein is involved in the repair of mismatches in DNA. It is required for dam-dependent methyl-directed DNA mismatch repair. May act as a 'molecular matchmaker', a protein that promotes the formation of a stable complex between two or more DNA-binding proteins in an ATP-dependent manner without itself being part of a final effector complex. In Herminiimonas arsenicoxydans, this protein is DNA mismatch repair protein MutL.